A 294-amino-acid polypeptide reads, in one-letter code: Probable 2-(5''-triphosphoribosyl)-3'-dephosphocoenzyme-A synthase (294 aa).

Belongs to the CitG/MdcB family.

The catalysed reaction is 3'-dephospho-CoA + ATP = 2'-(5''-triphospho-alpha-D-ribosyl)-3'-dephospho-CoA + adenine. The sequence is that of Probable 2-(5''-triphosphoribosyl)-3'-dephosphocoenzyme-A synthase from Streptococcus pyogenes serotype M3 (strain ATCC BAA-595 / MGAS315).